A 126-amino-acid polypeptide reads, in one-letter code: Fluoride-specific ion channel FluC (126 aa).

Transmembrane regions (helical) follow at residues 4–24 (PLLS…FLGL), 33–53 (IPLG…FAMA), 67–87 (FVIT…IEIV), and 97–117 (MAML…CLGL). Positions 74 and 77 each coordinate Na(+).

It belongs to the fluoride channel Fluc/FEX (TC 1.A.43) family.

The protein resides in the cell inner membrane. It catalyses the reaction fluoride(in) = fluoride(out). Its activity is regulated as follows. Na(+) is not transported, but it plays an essential structural role and its presence is essential for fluoride channel function. In terms of biological role, fluoride-specific ion channel. Important for reducing fluoride concentration in the cell, thus reducing its toxicity. This is Fluoride-specific ion channel FluC from Acinetobacter baumannii (strain ATCC 17978 / DSM 105126 / CIP 53.77 / LMG 1025 / NCDC KC755 / 5377).